Reading from the N-terminus, the 144-residue chain is Deoxyuridine 5'-triphosphate nucleotidohydrolase (144 aa).

Ser-66, Gly-79, Asp-82, Tyr-85, Lys-90, Arg-134, Phe-139, and Gly-140 together coordinate dUMP.

This sequence belongs to the dUTPase family. Homotrimer. Mg(2+) serves as cofactor.

The catalysed reaction is dUTP + H2O = dUMP + diphosphate + H(+). It functions in the pathway pyrimidine metabolism; dUMP biosynthesis; dUMP from dCTP (dUTP route): step 2/2. Its function is as follows. Involved in nucleotide metabolism via production of dUMP, the immediate precursor of thymidine nucleotides, and decreases the intracellular concentration of dUTP so that uracil cannot be incorporated into DNA. The chain is Deoxyuridine 5'-triphosphate nucleotidohydrolase (DUT1) from Candida glabrata (strain ATCC 2001 / BCRC 20586 / JCM 3761 / NBRC 0622 / NRRL Y-65 / CBS 138) (Yeast).